The chain runs to 299 residues: MSWIDRIFSKNTTSNSKKSNVPEGVWTKCTSCEQVLYRDELKRHLEVCPKCGHHMRIDARERLVALLDKDSIVEIAADLEPKDILKFRDLKKYKDRLSAAQKETGEKDALITVSATLYGMPIVVAALNFSFMGGSMGSVVGSKFVQAAEKAIELHCPLVCFSASGGARMQEALFSLMQMAKTSAVLAKMKEKGVPFISVLTDPTLGGVSASFAMLGDINIAEPKALIGFAGPRVIEQTVREKLPEGFQRSEFLLEHGAIDMIVKRSEMRETLANLLSKLMNMPSPFVEPELIQEKSDDV.

Residues 25 to 294 (VWTKCTSCEQ…PFVEPELIQE (270 aa)) enclose the CoA carboxyltransferase N-terminal domain. Zn(2+) is bound by residues cysteine 29, cysteine 32, cysteine 48, and cysteine 51. The C4-type zinc-finger motif lies at 29–51 (CTSCEQVLYRDELKRHLEVCPKC).

The protein belongs to the AccD/PCCB family. Acetyl-CoA carboxylase is a heterohexamer composed of biotin carboxyl carrier protein (AccB), biotin carboxylase (AccC) and two subunits each of ACCase subunit alpha (AccA) and ACCase subunit beta (AccD). Requires Zn(2+) as cofactor.

It is found in the cytoplasm. It carries out the reaction N(6)-carboxybiotinyl-L-lysyl-[protein] + acetyl-CoA = N(6)-biotinyl-L-lysyl-[protein] + malonyl-CoA. The protein operates within lipid metabolism; malonyl-CoA biosynthesis; malonyl-CoA from acetyl-CoA: step 1/1. Component of the acetyl coenzyme A carboxylase (ACC) complex. Biotin carboxylase (BC) catalyzes the carboxylation of biotin on its carrier protein (BCCP) and then the CO(2) group is transferred by the transcarboxylase to acetyl-CoA to form malonyl-CoA. The chain is Acetyl-coenzyme A carboxylase carboxyl transferase subunit beta from Histophilus somni (strain 129Pt) (Haemophilus somnus).